The chain runs to 70 residues: Prokaryotic ubiquitin-like protein UBact (70 aa).

Composition is skewed to basic and acidic residues over residues 1–15 (MPDQRQQERSRRKQG) and 24–50 (TRHDPPPSEQESPVRRMLRDLRERDPG). Residues 1-70 (MPDQRQQERS…RQQRREQSGE (70 aa)) form a disordered region. Glu70 is covalently cross-linked (Isoglutamyl lysine isopeptide (Glu-Lys) (interchain with K-? in acceptor proteins)).

It belongs to the ubiquitin-like protein UBact family.

Its function is as follows. May function as a protein modifier covalently attached to lysine residues of substrate proteins. This may serve to target the modified proteins for degradation by proteasomes. The polypeptide is Prokaryotic ubiquitin-like protein UBact (Terrybacteria sp. (strain RIFCSPHIGHO2_01_FULL_58_15)).